We begin with the raw amino-acid sequence, 598 residues long: Fibulin-1 (598 aa).

Intrachain disulfides connect Ala1-Cys25, Cys7-Cys26, Cys28-Cys52, Cys29-Cys59, Cys42-Cys60, Cys96-Cys106, Cys102-Cys115, Cys117-Cys130, Cys136-Cys149, Cys143-Cys158, Cys164-Cys176, Cys182-Cys195, Cys189-Cys204, Cys210-Cys222, Cys228-Cys242, Cys257-Cys270, Cys275-Cys288, Cys282-Cys297, Cys299-Cys312, Cys318-Cys330, Cys326-Cys339, Cys341-Cys354, Cys360-Cys369, Cys365-Cys378, Cys380-Cys394, Cys400-Cys413, Cys409-Cys422, Cys424-Cys438, Cys444-Cys457, Cys451-Cys466, and Cys471-Cys483. Anaphylatoxin-like domains lie at 1-27 (ANEQ…RCCH) and 28-60 (CCLL…RACC). Residue Asn14 is glycosylated (N-linked (GlcNAc...) asparagine). An EGF-like 1 domain is found at 92–131 (LNDRCRGGGPCKQQCRDTGDEVVCSCFVGYQLLSDGVSCE). An EGF-like 2; calcium-binding domain is found at 132 to 177 (DVNECITGSHSCRLGESCINTVGSFRCQRDSSCGTGYELTEDNSCK). Residues 178–223 (DIDQCESGIHNCLPDFICQNTLGSFRCRPKLQCKNGFIQDALANCI) form the EGF-like 3; calcium-binding domain. An EGF-like 4; calcium-binding domain is found at 224 to 270 (DINECLSIVSAPCPTGHTCINTEGSYTQKNVPNCGRGYHLNEEGTRC). Residues 271–313 (DVNECAPPAEPCGKGHRCVNSPGSFRCECKTGYYFDGISRMCV) form the EGF-like 5; calcium-binding domain. The interval 271–355 (DVNECAPPAE…RLSVDGRSCE (85 aa)) is self-association and FN1-binding. Residues 314-355 (DVNECQRYPGRLCGHKCENTLGSYVCSCSVGFRLSVDGRSCE) form the EGF-like 6; calcium-binding domain. The EGF-like 7; calcium-binding domain maps to 356–395 (DINECSSSPCSQECANVYGSYQCYCRRGYQLSDVDGVTCE). Residues 396 to 439 (DIDECALPTGGHICSYRCINIPGSFQCSCPASGYRLAPNGRNCQ) enclose the EGF-like 8; calcium-binding domain. The EGF-like 9; calcium-binding domain occupies 440 to 484 (DIDECVTGIHNCSINETCFNIQGGFRCLAFECPENYRRSAATRCE). N-linked (GlcNAc...) asparagine glycans are attached at residues Asn450 and Asn454.

Belongs to the fibulin family. In terms of assembly, homomultimerizes and interacts with various extracellular matrix components. Interacts with FBLN7. Interacts with the mature/soluble form of DTR. Interacts with CCN3.

The protein localises to the secreted. It localises to the extracellular space. It is found in the extracellular matrix. Functionally, incorporated into fibronectin-containing matrix fibers. May play a role in cell adhesion and migration along protein fibers within the extracellular matrix (ECM). Could be important for certain developmental processes and contribute to the supramolecular organization of ECM architecture, in particular to those of basement membranes. May serve to anchor the mature/soluble form of DTR to its fibers as it migrates through the extracellular matrix. The direct physical association with DTR may be useful in such tissue developmental processes as wound healing. The sequence is that of Fibulin-1 (FBLN1) from Chlorocebus aethiops (Green monkey).